The chain runs to 152 residues: Large ribosomal subunit protein bL9 (152 aa).

This sequence belongs to the bacterial ribosomal protein bL9 family.

In terms of biological role, binds to the 23S rRNA. The chain is Large ribosomal subunit protein bL9 from Mycobacterium avium (strain 104).